The following is a 129-amino-acid chain: MESSRLRLLPVLGAALLLLLPLLGAGAQEDAELQPRALDIYSAVDDASHEKELPRRQLRAPGAVLQIEALQEVLKKLKSKRIPIYEKKYGQVPMCDAGEQCAVRKGARIGKLCDCPRGTSCNSFLLKCL.

The N-terminal stretch at 1 to 27 (MESSRLRLLPVLGAALLLLLPLLGAGA) is a signal peptide. Phosphotyrosine is present on Tyr41. Ser48 carries the post-translational modification Phosphoserine. 3 disulfides stabilise this stretch: Cys95–Cys113, Cys101–Cys121, and Cys115–Cys128.

This sequence belongs to the CART family. In terms of tissue distribution, neuroendocrine tissues. Predominantly expressed in the hypothalamus, pituitary, and longitudinal muscle-myenteric plexus. Abundant expression is also seen in the midbrain/thalamus and eye. A lower level expression is seen in the other brain regions and adrenal.

It is found in the secreted. Functionally, satiety factor closely associated with the actions of leptin and neuropeptide y; this anorectic peptide inhibits both normal and starvation-induced feeding and completely blocks the feeding response induced by neuropeptide Y and regulated by leptin in the hypothalamus. This chain is Cocaine- and amphetamine-regulated transcript protein (Cartpt), found in Rattus norvegicus (Rat).